The primary structure comprises 258 residues: Snake venom serine protease 1 (258 aa).

Positions M1–A18 are cleaved as a signal peptide. Positions Q19–L24 are excised as a propeptide. The region spanning V25 to A249 is the Peptidase S1 domain. 6 cysteine pairs are disulfide-bonded: C31/C163, C50/C66, C98/C256, C142/C210, C174/C189, and C200/C225. N-linked (GlcNAc...) asparagine glycosylation is present at N44. Residues H65 and D110 each act as charge relay system in the active site. The active-site Charge relay system is S204.

The protein belongs to the peptidase S1 family. Snake venom subfamily. In terms of assembly, monomer. Expressed by the venom gland.

It localises to the secreted. Its function is as follows. Snake venom serine protease that may act in the hemostasis system of the prey. The chain is Snake venom serine protease 1 (TLG1) from Craspedocephalus gramineus (Bamboo pit viper).